Reading from the N-terminus, the 217-residue chain is Acyl-homoserine-lactone synthase (217 aa).

This sequence belongs to the autoinducer synthase family.

The catalysed reaction is a fatty acyl-[ACP] + S-adenosyl-L-methionine = an N-acyl-L-homoserine lactone + S-methyl-5'-thioadenosine + holo-[ACP] + H(+). In terms of biological role, required for the synthesis of OHHL (N-(3-oxohexanoyl)-L-homoserine lactone), an autoinducer molecule which binds to ExpR and thus acts in virulence (soft rot disease) through the activation of genes for plant tissue macerating enzymes. In Pectobacterium parmentieri, this protein is Acyl-homoserine-lactone synthase (expI).